We begin with the raw amino-acid sequence, 219 residues long: MAGRPVPAGRQEEELAKDPGQKLSLARPPGRLPSIDETRPAGPGPASRRGSVLGPASSFSRRNSLAGAGAGPGGRRPSLGPVPPLGWRVSFSGLPLGPARRPAPSYRTEPAPGERWEAARAQRALEAALAAGLRDARYVGAEAGRLARELCDLARVHLRELSPPRYKLVCSVVLGPRAGQGVHVPSRALWDTACDGLASATVTNASLFAVATVHGLYCE.

The segment at Met1–Pro84 is disordered. Residues Arg10–Gly20 are compositionally biased toward basic and acidic residues. Residue Ser64 is modified to Phosphoserine.

The protein belongs to the dynein light chain Tctex-type family. In terms of assembly, interacts with ENG/endoglin, TGFBR2 and TGFBR3. Interacts with PPP1CC.

The protein resides in the cell projection. The protein localises to the cilium. It is found in the flagellum. It localises to the cytoplasmic vesicle. Its subcellular location is the secretory vesicle. The protein resides in the acrosome. The protein localises to the cytoplasm. It is found in the cytoskeleton. It localises to the cilium axoneme. Its subcellular location is the nucleus. The protein resides in the microtubule organizing center. This chain is Dynein light chain Tctex-type 4 (DYNLT4), found in Sus scrofa (Pig).